Reading from the N-terminus, the 294-residue chain is MGDGVSEERSPLCGKSATSCSERVRDRGTRADLECSLRGHSLKDIPVTSTSSPGSSKEEVLDSQSPGEADYCRRILVRDAKGTIREIVLPKGLDLDRPKRTRTSFTAEQLYRLELEFQRCQYVVGRERTELARQLNLSETQVKVWFQNRRTKQKKDQSRDSEKRSSSTSESFATCNILRLLEQGRLLSVPAPPNMISSQNNMGTSSGNGTSLGTSGSTSPVISTTPPGAGAFSLQVPSLAASSSPRLPTPFYFPGPLLGGLHEIPSGYGLGSSAFEPYTRLDRKDTASGKKSTS.

The span at 1–10 (MGDGVSEERS) shows a compositional bias: basic and acidic residues. Disordered stretches follow at residues 1 to 27 (MGDGVSEERSPLCGKSATSCSERVRDR), 43 to 65 (KDIPVTSTSSPGSSKEEVLDSQS), 149 to 168 (RRTKQKKDQSRDSEKRSSST), 190 to 223 (PAPPNMISSQNNMGTSSGNGTSLGTSGSTSPVIS), and 272 to 294 (SSAFEPYTRLDRKDTASGKKSTS). The homeobox DNA-binding region spans 98–157 (PKRTRTSFTAEQLYRLELEFQRCQYVVGRERTELARQLNLSETQVKVWFQNRRTKQKKDQ). A compositionally biased stretch (basic and acidic residues) spans 154–165 (KKDQSRDSEKRS). Low complexity predominate over residues 197-219 (SSQNNMGTSSGNGTSLGTSGSTS). The span at 279-288 (TRLDRKDTAS) shows a compositional bias: basic and acidic residues.

It belongs to the EMX homeobox family.

Its subcellular location is the nucleus. In terms of biological role, transcription factor that may function in dorsoventral specification of the forebrain. Regulates the expression of Wnt signaling antagonists. This Xenopus laevis (African clawed frog) protein is Ventral anterior homeobox 2b (vax2-b).